The chain runs to 418 residues: Actin-related protein 3 (418 aa).

The protein belongs to the actin family. ARP3 subfamily. In terms of assembly, component of the Arp2/3 complex composed of actr2/arp2, actr3/arp3, arpc1b, arpc2, arpc3, arpc4 and arpc5.

It is found in the cytoplasm. Its subcellular location is the cytoskeleton. The protein resides in the cell projection. It localises to the nucleus. Functionally, ATP-binding component of the Arp2/3 complex, a multiprotein complex that mediates actin polymerization upon stimulation by nucleation-promoting factor (NPF). The Arp2/3 complex mediates the formation of branched actin networks in the cytoplasm, providing the force for cell motility. Seems to contact the pointed end of the daughter actin filament. In addition to its role in the cytoplasmic cytoskeleton, the Arp2/3 complex also promotes actin polymerization in the nucleus, thereby regulating gene transcription and repair of damaged DNA. The Arp2/3 complex promotes homologous recombination (HR) repair in response to DNA damage by promoting nuclear actin polymerization, leading to drive motility of double-strand breaks (DSBs). The protein is Actin-related protein 3 (actr3) of Takifugu rubripes (Japanese pufferfish).